The primary structure comprises 305 residues: Ribonuclease BN (305 aa).

Positions 64, 66, 68, 69, 141, 212, and 270 each coordinate Zn(2+). Aspartate 68 serves as the catalytic Proton acceptor.

The protein belongs to the RNase Z family. RNase BN subfamily. As to quaternary structure, homodimer. Zn(2+) is required as a cofactor.

In terms of biological role, zinc phosphodiesterase, which has both exoribonuclease and endoribonuclease activities. This Salmonella paratyphi C (strain RKS4594) protein is Ribonuclease BN.